The chain runs to 214 residues: MLKLFNVNFNNMPERKLDEIFSLREITFKDRLDWKVTCIDGKESDQYDDENTNYILGTIDDTIVCSVRFIDMKYPTMITGPFAPYFSDVSLPIDGFIESSRFFVEKALARDMVGNNSSLSTILFLAMVNYARDRGHKGILTVVSRGMFILLKRSGWNITVLNQGESEKNEVIYLLHLGIDNDSQQQLINKILRVHQVEPKTLETWPIIVPGIIK.

It belongs to the autoinducer synthase family.

The enzyme catalyses a fatty acyl-[ACP] + S-adenosyl-L-methionine = an N-acyl-L-homoserine lactone + S-methyl-5'-thioadenosine + holo-[ACP] + H(+). Its function is as follows. Required for the synthesis of autoinducer molecules such as OHHL (N-(3-oxohexanoyl)-L-homoserine lactone), and HHL (N-hexanoyl-L-homoserine lactone). This chain is Acyl-homoserine-lactone synthase (yenI), found in Yersinia enterocolitica.